The following is a 198-amino-acid chain: Elongation factor Ts (198 aa).

The involved in Mg(2+) ion dislocation from EF-Tu stretch occupies residues 81–84 (TDFV).

This sequence belongs to the EF-Ts family.

It is found in the cytoplasm. Functionally, associates with the EF-Tu.GDP complex and induces the exchange of GDP to GTP. It remains bound to the aminoacyl-tRNA.EF-Tu.GTP complex up to the GTP hydrolysis stage on the ribosome. The sequence is that of Elongation factor Ts from Pseudothermotoga lettingae (strain ATCC BAA-301 / DSM 14385 / NBRC 107922 / TMO) (Thermotoga lettingae).